The following is a 221-amino-acid chain: Putative 3-methyladenine DNA glycosylase (221 aa).

The protein belongs to the DNA glycosylase MPG family.

The protein is Putative 3-methyladenine DNA glycosylase of Herpetosiphon aurantiacus (strain ATCC 23779 / DSM 785 / 114-95).